The sequence spans 428 residues: Histidine--tRNA ligase (428 aa).

The protein belongs to the class-II aminoacyl-tRNA synthetase family. As to quaternary structure, homodimer.

It localises to the cytoplasm. It carries out the reaction tRNA(His) + L-histidine + ATP = L-histidyl-tRNA(His) + AMP + diphosphate + H(+). The chain is Histidine--tRNA ligase from Lactobacillus johnsonii (strain CNCM I-12250 / La1 / NCC 533).